The following is a 101-amino-acid chain: UPF0235 protein Cphamn1_2066 (101 aa).

It belongs to the UPF0235 family.

The chain is UPF0235 protein Cphamn1_2066 from Chlorobium phaeobacteroides (strain BS1).